Consider the following 610-residue polypeptide: Ectonucleoside triphosphate diphosphohydrolase 7 (610 aa).

At 1-28 (MARISFSCLFPASWHCSLPSVTQFSRQR) the chain is on the cytoplasmic side. The chain crosses the membrane as a helical span at residues 29-49 (VALLIISVAVFILVFAAVADL). Over 50–555 (QLWSSRAFRD…VSWFRISFVY (506 aa)) the chain is Vesicular. Glutamate 217 functions as the Proton acceptor in the catalytic mechanism. 2 N-linked (GlcNAc...) asparagine glycosylation sites follow: asparagine 336 and asparagine 400. A disulfide bond links cysteine 454 and cysteine 483. Residues 556–576 (NHYLFFACILVVLLSIVLYIL) form a helical membrane-spanning segment. Over 577–610 (RLRRIHRRQARASALDLLLMEEGVHTVLEPGIPT) the chain is Cytoplasmic.

This sequence belongs to the GDA1/CD39 NTPase family. The cofactor is Ca(2+). Mg(2+) is required as a cofactor.

Its subcellular location is the cytoplasmic vesicle membrane. It carries out the reaction a ribonucleoside 5'-triphosphate + H2O = a ribonucleoside 5'-diphosphate + phosphate + H(+). The catalysed reaction is UTP + H2O = UDP + phosphate + H(+). The enzyme catalyses GTP + H2O = GDP + phosphate + H(+). It catalyses the reaction CTP + H2O = CDP + phosphate + H(+). Catalyzes the hydrolysis of nucleoside triphosphates and diphosphates in a calcium- or magnesium-dependent manner. Preferentially hydrolyzes nucleoside 5'-triphosphates, with substrate preference for UTP &gt; GTP &gt; CTP. Hydrolyzes ATP and nucleoside diphosphates only to a minor extent. This Xenopus tropicalis (Western clawed frog) protein is Ectonucleoside triphosphate diphosphohydrolase 7 (entpd7).